A 107-amino-acid polypeptide reads, in one-letter code: Ig kappa chain V-VI region NQ2-17.4.1 (107 aa).

Residues 1-23 (QIVLTQSPAIMSASPGQKVTMTC) are framework-1. Cys-23 and Cys-87 are disulfide-bonded. Residues 24–33 (SASSSVSYMH) are complementarity-determining-1. Positions 34–48 (WYQQKSGTSPKRWIY) are framework-2. A complementarity-determining-2 region spans residues 49 to 55 (DTSKLAS). The interval 56 to 87 (GVPARFSGSGSATSYSLTITSMQAEDAATYYC) is framework-3. Residues 88-96 (QQWSSNPLT) form a complementarity-determining-3 region. The framework-4 stretch occupies residues 97–106 (FGAGTKLELK).

Its function is as follows. Anti-2-phenyl oxazolone (PHOX) Antibody. The sequence is that of Ig kappa chain V-VI region NQ2-17.4.1 from Mus musculus (Mouse).